The following is a 364-amino-acid chain: Dual-specificity RNA methyltransferase RlmN (364 aa).

Glu-91 acts as the Proton acceptor in catalysis. The Radical SAM core domain occupies 97–333 (EDDRGTLCVS…VTVRKTRGDD (237 aa)). Cys-104 and Cys-338 are disulfide-bonded. [4Fe-4S] cluster is bound by residues Cys-111, Cys-115, and Cys-118. S-adenosyl-L-methionine is bound by residues 164–165 (GE), Ser-196, 218–220 (SLH), and Asn-295. The active-site S-methylcysteine intermediate is the Cys-338.

Belongs to the radical SAM superfamily. RlmN family. Requires [4Fe-4S] cluster as cofactor.

The protein resides in the cytoplasm. It catalyses the reaction adenosine(2503) in 23S rRNA + 2 reduced [2Fe-2S]-[ferredoxin] + 2 S-adenosyl-L-methionine = 2-methyladenosine(2503) in 23S rRNA + 5'-deoxyadenosine + L-methionine + 2 oxidized [2Fe-2S]-[ferredoxin] + S-adenosyl-L-homocysteine. The catalysed reaction is adenosine(37) in tRNA + 2 reduced [2Fe-2S]-[ferredoxin] + 2 S-adenosyl-L-methionine = 2-methyladenosine(37) in tRNA + 5'-deoxyadenosine + L-methionine + 2 oxidized [2Fe-2S]-[ferredoxin] + S-adenosyl-L-homocysteine. Specifically methylates position 2 of adenine 2503 in 23S rRNA and position 2 of adenine 37 in tRNAs. m2A2503 modification seems to play a crucial role in the proofreading step occurring at the peptidyl transferase center and thus would serve to optimize ribosomal fidelity. The chain is Dual-specificity RNA methyltransferase RlmN from Chromobacterium violaceum (strain ATCC 12472 / DSM 30191 / JCM 1249 / CCUG 213 / NBRC 12614 / NCIMB 9131 / NCTC 9757 / MK).